Consider the following 125-residue polypeptide: Small ribosomal subunit protein bS6 (125 aa).

Positions 96-125 (VTAPSPMMREEKAKSAPQPAEEAKETTLAT) are disordered. A compositionally biased stretch (basic and acidic residues) spans 116–125 (EEAKETTLAT).

This sequence belongs to the bacterial ribosomal protein bS6 family.

Binds together with bS18 to 16S ribosomal RNA. In Nitrosospira multiformis (strain ATCC 25196 / NCIMB 11849 / C 71), this protein is Small ribosomal subunit protein bS6.